Reading from the N-terminus, the 145-residue chain is Transcriptional regulator MraZ (145 aa).

SpoVT-AbrB domains lie at 5-49 and 78-121; these read TYNH…LESE and TYKV…AKEV.

This sequence belongs to the MraZ family. Forms oligomers.

Its subcellular location is the cytoplasm. The protein resides in the nucleoid. The chain is Transcriptional regulator MraZ from Ureaplasma urealyticum serovar 10 (strain ATCC 33699 / Western).